The sequence spans 174 residues: NADH-ubiquinone oxidoreductase chain 6 (174 aa).

Helical transmembrane passes span 24 to 44 (LALG…TGLM), 53 to 73 (ILFL…TSLA), 82 to 102 (MKLT…SFIM), and 143 to 163 (FITI…VKIT).

Belongs to the complex I subunit 6 family.

It localises to the mitochondrion membrane. It carries out the reaction a ubiquinone + NADH + 5 H(+)(in) = a ubiquinol + NAD(+) + 4 H(+)(out). Core subunit of the mitochondrial membrane respiratory chain NADH dehydrogenase (Complex I) that is believed to belong to the minimal assembly required for catalysis. Complex I functions in the transfer of electrons from NADH to the respiratory chain. The immediate electron acceptor for the enzyme is believed to be ubiquinone. The sequence is that of NADH-ubiquinone oxidoreductase chain 6 (mt:ND6) from Drosophila melanogaster (Fruit fly).